The chain runs to 333 residues: Phospholipid phosphatase-related protein type 1 (333 aa).

The next 3 membrane-spanning stretches (helical) occupy residues 12–32 (IIPC…LLAY), 66–86 (FIQP…IIFV), and 126–146 (FIGV…AGQV). An N-linked (GlcNAc...) asparagine glycan is attached at Asn162. The next 3 membrane-spanning stretches (helical) occupy residues 200 to 217 (ASLS…ITST), 223 to 243 (SRLA…LTGL), and 256 to 276 (VVAG…CVVN).

It belongs to the PA-phosphatase related phosphoesterase family.

Its subcellular location is the cell membrane. The protein localises to the cell projection. It localises to the neuron projection. May play a role in neurite outgrowth and neurogenesis. This chain is Phospholipid phosphatase-related protein type 1 (plppr1), found in Danio rerio (Zebrafish).